Here is a 502-residue protein sequence, read N- to C-terminus: Aspartyl/glutamyl-tRNA(Asn/Gln) amidotransferase subunit B (502 aa).

Belongs to the GatB/GatE family. GatB subfamily. In terms of assembly, heterotrimer of A, B and C subunits.

It catalyses the reaction L-glutamyl-tRNA(Gln) + L-glutamine + ATP + H2O = L-glutaminyl-tRNA(Gln) + L-glutamate + ADP + phosphate + H(+). It carries out the reaction L-aspartyl-tRNA(Asn) + L-glutamine + ATP + H2O = L-asparaginyl-tRNA(Asn) + L-glutamate + ADP + phosphate + 2 H(+). Its function is as follows. Allows the formation of correctly charged Asn-tRNA(Asn) or Gln-tRNA(Gln) through the transamidation of misacylated Asp-tRNA(Asn) or Glu-tRNA(Gln) in organisms which lack either or both of asparaginyl-tRNA or glutaminyl-tRNA synthetases. The reaction takes place in the presence of glutamine and ATP through an activated phospho-Asp-tRNA(Asn) or phospho-Glu-tRNA(Gln). The chain is Aspartyl/glutamyl-tRNA(Asn/Gln) amidotransferase subunit B from Brucella suis (strain ATCC 23445 / NCTC 10510).